Consider the following 207-residue polypeptide: Small ribosomal subunit protein uS4 (207 aa).

Residues 31-53 (KAKFDSKPGQHGRTSGARTSDYG) are disordered. The S4 RNA-binding domain maps to 97 to 157 (CRLDNVVYRM…EKSKKQARIV (61 aa)).

Belongs to the universal ribosomal protein uS4 family. In terms of assembly, part of the 30S ribosomal subunit. Contacts protein S5. The interaction surface between S4 and S5 is involved in control of translational fidelity.

Its function is as follows. One of the primary rRNA binding proteins, it binds directly to 16S rRNA where it nucleates assembly of the body of the 30S subunit. With S5 and S12 plays an important role in translational accuracy. The sequence is that of Small ribosomal subunit protein uS4 from Acidovorax ebreus (strain TPSY) (Diaphorobacter sp. (strain TPSY)).